The chain runs to 130 residues: Small ribosomal subunit protein uS9 (130 aa).

It belongs to the universal ribosomal protein uS9 family.

This Acidovorax ebreus (strain TPSY) (Diaphorobacter sp. (strain TPSY)) protein is Small ribosomal subunit protein uS9.